Here is a 556-residue protein sequence, read N- to C-terminus: 2-succinyl-5-enolpyruvyl-6-hydroxy-3-cyclohexene-1-carboxylate synthase (556 aa).

It belongs to the TPP enzyme family. MenD subfamily. Homodimer. The cofactor is Mg(2+). Mn(2+) is required as a cofactor. Requires thiamine diphosphate as cofactor.

It catalyses the reaction isochorismate + 2-oxoglutarate + H(+) = 5-enolpyruvoyl-6-hydroxy-2-succinyl-cyclohex-3-ene-1-carboxylate + CO2. It participates in quinol/quinone metabolism; 1,4-dihydroxy-2-naphthoate biosynthesis; 1,4-dihydroxy-2-naphthoate from chorismate: step 2/7. The protein operates within quinol/quinone metabolism; menaquinone biosynthesis. In terms of biological role, catalyzes the thiamine diphosphate-dependent decarboxylation of 2-oxoglutarate and the subsequent addition of the resulting succinic semialdehyde-thiamine pyrophosphate anion to isochorismate to yield 2-succinyl-5-enolpyruvyl-6-hydroxy-3-cyclohexene-1-carboxylate (SEPHCHC). In Citrobacter koseri (strain ATCC BAA-895 / CDC 4225-83 / SGSC4696), this protein is 2-succinyl-5-enolpyruvyl-6-hydroxy-3-cyclohexene-1-carboxylate synthase.